The sequence spans 234 residues: MQFFPPLQRATLIQRYKRFLADVITPDGRELTLHCPNTGAMTGCATPGDTVWYSTSENTKRKYPHTWELTETQAGALICVNTLWANRLTKEALENDWLSELSGYSELRSEVKYGAERSRIDFMLQAGFQPDCYIEVKSVTLADHGQGYFPDAITQRGQKHLRELMSVAAEGQRAVILFAVLHSAITRFSPARHIDMKYAQLLTEAQQRGVEILAYKAEISAEGMSLKKLLPITL.

The segment at residues 201 to 220 (LLTEAQQRGVEILAYKAEIS) is a DNA-binding region (H-T-H motif).

This sequence belongs to the SfsA family.

In terms of biological role, binds to DNA non-specifically. Could be a regulatory factor involved in maltose metabolism. The protein is Sugar fermentation stimulation protein A of Escherichia fergusonii (strain ATCC 35469 / DSM 13698 / CCUG 18766 / IAM 14443 / JCM 21226 / LMG 7866 / NBRC 102419 / NCTC 12128 / CDC 0568-73).